The sequence spans 447 residues: Probable butyrate:acetyl-CoA coenzyme A-transferase (447 aa).

Position 220–224 (220–224) interacts with CoA; the sequence is GIGGT. Glu245 serves as the catalytic 5-glutamyl coenzyme A thioester intermediate. Positions 320 and 343 each coordinate CoA.

Belongs to the acetyl-CoA hydrolase/transferase family.

Its subcellular location is the cytoplasm. The catalysed reaction is butanoate + acetyl-CoA = butanoyl-CoA + acetate. It functions in the pathway lipid metabolism; butanoate metabolism. Its function is as follows. Coenzyme A-transferase that converts butyrate to butyryl-CoA. Involved in the syntrophic growth of S.wolfei on butyrate in cooperation with methanogens or an appropriate hydrogen-scavenging bacterium, as part of the butyrate oxidation pathway. The polypeptide is Probable butyrate:acetyl-CoA coenzyme A-transferase (Syntrophomonas wolfei subsp. wolfei (strain DSM 2245B / Goettingen)).